The primary structure comprises 1145 residues: Probable ATP-dependent RNA helicase DHX34 (1145 aa).

Over residues 1-14 (MPPPRTREGRGHRD) the composition is skewed to basic and acidic residues. Residues 1 to 27 (MPPPRTREGRGHRDRDHHRAPREEEAP) form a disordered region. A Helicase ATP-binding domain is found at 174–334 (LQTLKEHQVV…FSHAPVVQVP (161 aa)). Residue 187–194 (GDTGCGKS) participates in ATP binding. Residues 281 to 284 (DEVH) carry the DEAH box motif. Residues 370-538 (AIDNKYPPEE…ALVLQMKSMS (169 aa)) enclose the Helicase C-terminal domain. Disordered regions lie at residues 726–764 (LKRQ…QRAD) and 1091–1114 (NTCP…PQKT). Phosphoserine is present on residues serine 749 and serine 750.

This sequence belongs to the DEAD box helicase family. DEAH subfamily. Forms a complex with RUVBL1 and RUVBL2. Part of a complex composed of SMG1, DHX34 and UPF1; within the complex DHX34 acts as a scaffolding protein to facilitate SMG1 phosphorylation of UPF1. Interacts with UPF1, MOV10, EIF4A3, XRN2, SMG6, SMG7, SMG9, UPF3A, UPF3B, CASC3/MLN51, XRN1, DIS3 and DCP1A; the interactions are RNA-independent. Interacts with NCBP1/CPB80; the interaction is RNA-dependent. Interacts (via C-terminus) with SMG1; the interaction is RNA-independent.

The catalysed reaction is ATP + H2O = ADP + phosphate + H(+). In terms of biological role, probable ATP-binding RNA helicase. Required for nonsense-mediated decay (NMD) degradation of mRNA transcripts containing premature stop codons. Promotes the phosphorylation of UPF1 along with its interaction with key NMD pathway proteins UPF2 and EIF4A3. Negatively regulates the nucleotide binding ability and ATP hydrolysis of the RUVBL1-RUVBL2 complex via induction of N-terminus conformation changes of the RUVBL2 subunits. This Mus musculus (Mouse) protein is Probable ATP-dependent RNA helicase DHX34.